The sequence spans 185 residues: Ribosome-recycling factor (185 aa).

Belongs to the RRF family.

The protein resides in the cytoplasm. Functionally, responsible for the release of ribosomes from messenger RNA at the termination of protein biosynthesis. May increase the efficiency of translation by recycling ribosomes from one round of translation to another. The protein is Ribosome-recycling factor of Enterobacter sp. (strain 638).